The chain runs to 110 residues: Replication initiation control protein YabA (110 aa).

Residues His-84, Cys-86, Cys-100, and Cys-103 each coordinate Zn(2+).

The protein belongs to the YabA family. Homotetramer. Interacts with both DnaA and DnaN, acting as a bridge between these two proteins. Zn(2+) serves as cofactor.

It is found in the cytoplasm. Its subcellular location is the nucleoid. Involved in control of chromosome replication initiation. Inhibits the cooperative binding of DnaA to the oriC region, thus negatively regulating initiation of chromosome replication. Inhibits the ability of DnaA-ATP to form a helix on DNA; does not disassemble preformed DnaA-DNA helices. Decreases the residence time of DnaA on the chromosome at its binding sites (oriC, replication forks and promoter-binding sites). Tethers DnaA to the replication machinery via the DNA polymerase beta sliding clamp subunit (dnaN). Associates with oriC and other DnaA targets on the chromosome in a DnaA-dependent manner. This is Replication initiation control protein YabA from Streptococcus mutans serotype c (strain ATCC 700610 / UA159).